A 423-amino-acid chain; its full sequence is Transmembrane protein 130 (423 aa).

Positions 1-24 (MAQAVWSRLGRILWLSCLLPWAPA) are cleaved as a signal peptide. At 25 to 339 (GVAAGLYELN…IQVWPSRIQP (315 aa)) the chain is on the extracellular side. Residues asparagine 34, asparagine 197, and asparagine 300 are each glycosylated (N-linked (GlcNAc...) asparagine). In terms of domain architecture, PKD spans 147-233 (WPSSYLTKTI…AVMQKTGDFS (87 aa)). The chain crosses the membrane as a helical span at residues 340 to 360 (AVFAFPCATLITVMLAFIMYM). The Cytoplasmic portion of the chain corresponds to 361–423 (TLRNATQQKD…LYKSVKTYTV (63 aa)).

Its subcellular location is the golgi apparatus membrane. This Pongo abelii (Sumatran orangutan) protein is Transmembrane protein 130 (TMEM130).